Here is a 254-residue protein sequence, read N- to C-terminus: MFKKLIKKNKNQPIQSEFGLDLHNIPEHVAIIMDGNGRWAKQRKLPRIKGHYQGMQTVKKITKVASDIGIKYLTLYAFSTENWTRPENEVNYIMNLPVNFLKTFLPELIENNVKVETIGFMEYLPSSTLKAIAKAKEDTKDNTGLKLIFAINYGGRAEILNSVKTIYDELTAKGLTSDDITEQMIDDHLMTHAYPDPDLLIRTSGEQRISNFLIWQVSYSEFIFNEKLWPDFDKEELINCIKIYQSRQRRFGGL.

Residue D34 is part of the active site. Position 34 (D34) interacts with Mg(2+). Substrate-binding positions include 35–38 (GNGR), W39, R47, H51, and 79–81 (STE). The active-site Proton acceptor is N82. Substrate is bound by residues W83, R85, R202, and 208-210 (RIS). E221 serves as a coordination point for Mg(2+).

This sequence belongs to the UPP synthase family. As to quaternary structure, homodimer. Mg(2+) serves as cofactor.

Functionally, catalyzes the condensation of isopentenyl diphosphate (IPP) with allylic pyrophosphates generating different type of terpenoids. The chain is Isoprenyl transferase from Staphylococcus saprophyticus subsp. saprophyticus (strain ATCC 15305 / DSM 20229 / NCIMB 8711 / NCTC 7292 / S-41).